The following is a 458-amino-acid chain: UDP-N-acetylmuramoylalanine--D-glutamate ligase (458 aa).

Residue 124-130 (GSDGKTT) participates in ATP binding.

This sequence belongs to the MurCDEF family.

The protein resides in the cytoplasm. The enzyme catalyses UDP-N-acetyl-alpha-D-muramoyl-L-alanine + D-glutamate + ATP = UDP-N-acetyl-alpha-D-muramoyl-L-alanyl-D-glutamate + ADP + phosphate + H(+). The protein operates within cell wall biogenesis; peptidoglycan biosynthesis. Its function is as follows. Cell wall formation. Catalyzes the addition of glutamate to the nucleotide precursor UDP-N-acetylmuramoyl-L-alanine (UMA). The sequence is that of UDP-N-acetylmuramoylalanine--D-glutamate ligase from Clostridium tetani (strain Massachusetts / E88).